A 244-amino-acid polypeptide reads, in one-letter code: DNA repair protein RecO (244 aa).

The protein belongs to the RecO family.

Involved in DNA repair and RecF pathway recombination. This Koribacter versatilis (strain Ellin345) protein is DNA repair protein RecO.